Here is a 163-residue protein sequence, read N- to C-terminus: MSFKLNSLKDNAGSRVGRVRVGRGIGSGLGKTAGRGQKGQKSRSGVSINGFAGGQMPIYMRLPKRGFNNVFSKDYAEVNLGVVQKLIESGRLDAKNPIDHQALKAAGVARGGKDGVRILGKGEIASKVAFKVAGISKAAREAVEKAGGSVEIIARRNVEKTDA.

Positions 27 to 37 are enriched in gly residues; that stretch reads SGLGKTAGRGQ. The segment at 27–46 is disordered; sequence SGLGKTAGRGQKGQKSRSGV.

The protein belongs to the universal ribosomal protein uL15 family. In terms of assembly, part of the 50S ribosomal subunit.

Functionally, binds to the 23S rRNA. This chain is Large ribosomal subunit protein uL15, found in Zymomonas mobilis subsp. mobilis (strain ATCC 31821 / ZM4 / CP4).